A 358-amino-acid polypeptide reads, in one-letter code: Protein-arginine kinase (358 aa).

Residues 24–255 (IVLSSRIRLA…KQLIRQERVA (232 aa)) enclose the Phosphagen kinase C-terminal domain. ATP-binding positions include 27–31 (SSRIR), His-92, Arg-126, 177–181 (RASVM), and 208–213 (RGIYGE). An RDXXRA motif of the pArg binding pocket involved in allosteric regulation motif is present at residues 338 to 343 (RDERRA).

This sequence belongs to the ATP:guanido phosphotransferase family.

The catalysed reaction is L-arginyl-[protein] + ATP = N(omega)-phospho-L-arginyl-[protein] + ADP + H(+). Appears to be allosterically activated by the binding of pArg-containing polypeptides to the pArg-binding pocket localized in the C-terminal domain of McsB. Functionally, catalyzes the specific phosphorylation of arginine residues in a large number of proteins. Is part of the bacterial stress response system. Protein arginine phosphorylation has a physiologically important role and is involved in the regulation of many critical cellular processes, such as protein homeostasis, motility, competence, and stringent and stress responses, by regulating gene expression and protein activity. This Shouchella clausii (strain KSM-K16) (Alkalihalobacillus clausii) protein is Protein-arginine kinase.